The chain runs to 904 residues: Alpha-actinin-4 (904 aa).

The interval 1–27 (MVDYHSAGQPYPYGGNGPGPNGDYMAQ) is disordered. The interval 1–259 (MVDYHSAGQP…IMTYVSSFYH (259 aa)) is actin-binding. Calponin-homology (CH) domains lie at 43-147 (KQQR…LRFA) and 156-262 (TSAK…HAFS). 4 Spectrin repeats span residues 286–396 (HLME…WLLN), 406–511 (HLAE…ALEK), 521–632 (ELHL…ALQD), and 642–745 (RLRR…EVEN). EF-hand domains are found at residues 758–793 (EQMQ…LGYD) and 799–834 (QGDA…ETTD). Residues Asp-771, Asp-773, Glu-782, Asp-812, Asn-814, Ser-816, and Ser-818 each coordinate Ca(2+).

Belongs to the alpha-actinin family. As to quaternary structure, homodimer; antiparallel. Component of the CART complex. May interact with nuclear receptors.

Its subcellular location is the nucleus. The protein resides in the cytoplasm. The protein localises to the cell junction. It localises to the perinuclear region. Its function is as follows. F-actin cross-linking protein which is thought to anchor actin to a variety of intracellular structures. This is a bundling protein. Probably involved in vesicular trafficking via its association with the CART complex. Involved in tight junction assembly in epithelial cells. May also function as a transcriptional coactivator, stimulating transcription mediated by nuclear hormone receptors. The chain is Alpha-actinin-4 from Gallus gallus (Chicken).